The sequence spans 113 residues: Protein ORF3 (113 aa).

Hydrophobic stretches follow at residues 1 to 21 (MGSP…CLCC) and 32 to 52 (AVVG…GLIL). The interaction with host HPX stretch occupies residues 27–67 (ASRLAAVVGGATAVPAVVSGVTGLILSPSPSPIFIQPTPSL). Residues 47-71 (VTGLILSPSPSPIFIQPTPSLPMSF) form an interaction with the capsid protein region. A Phosphoserine; by host modification is found at Ser70. The interval 71 to 113 (FHNPGLELALDSRPAPLAPLGVTSPSAPPLPPVVDLPQLGLRR) is homodimerization, and interaction with host AMBP/bikunin. Residues 89 to 113 (PLGVTSPSAPPLPPVVDLPQLGLRR) form a disordered region. The interaction with host SRC, HCK, FYN, PIK3R3 and GRB2 stretch occupies residues 94–103 (SPSAPPLPPV). Residues 95-98 (PSAP) carry the PTAP/PSAP motif motif.

It belongs to the hepevirus ORF3 protein family. Forms homooligomers. Interacts with host SRC, HCK, FYN, PIK3R3 and GRB2 (via SH3 domain); binding does not activate the kinases. Interacts with host AMBP/bikunin and AMBP/alpha-1-microglobulin peptides. Interacts with host HPX/hemopexin. Interacts (when phosphorylated) with capsid protein ORF2. Interacts with host TSG101; this interaction plays a role in viral release from the host cell. Interacts with host SIRPA; this interaction down-regulates the phosphorylation of host IRF3. Post-translationally, palmitoylated in the N-terminus.

Its subcellular location is the host endoplasmic reticulum membrane. It localises to the host cytoplasm. The protein localises to the host cytoskeleton. The protein resides in the virion. It is found in the host cell membrane. In terms of biological role, small multifunctional phosphoprotein involved in virion morphogenesis, egress and counteracting host innate immunity. Plays critical roles in the final steps of viral release by interacting with host TSG101, a member of the vacuolar protein-sorting pathway and using other cellular host proteins involved in vesicle formation pathway. Also acts as a viroporin and forms ion conductive pores allowing viral particle release. Impairs the generation of type I interferon by down-regulating host TLR3 and TLR7 as well as their downstream signaling pathways. Down-regulates the phosphorylation of host IRF3 via the interaction with host SIRP-alpha, thereby inhibiting IFN-I expression. Interacts with host microtubules. This chain is Protein ORF3, found in Bandicota bengalensis (lesser bandicoot rat).